The chain runs to 235 residues: Thiamine import ATP-binding protein ThiQ (235 aa).

One can recognise an ABC transporter domain in the interval 2–230 (LKLIDITWLY…QASASALLGI (229 aa)). Residue 32–39 (GPSGAGKS) participates in ATP binding.

The protein belongs to the ABC transporter superfamily. Thiamine importer (TC 3.A.1.19.1) family. The complex is composed of two ATP-binding proteins (ThiQ), two transmembrane proteins (ThiP) and a solute-binding protein (ThiB).

The protein localises to the cell inner membrane. It carries out the reaction thiamine(out) + ATP + H2O = thiamine(in) + ADP + phosphate + H(+). Functionally, part of the ABC transporter complex ThiBPQ involved in thiamine import. Responsible for energy coupling to the transport system. This is Thiamine import ATP-binding protein ThiQ from Salmonella paratyphi A (strain ATCC 9150 / SARB42).